A 280-amino-acid polypeptide reads, in one-letter code: Probable endonuclease 4 (280 aa).

9 residues coordinate Zn(2+): His-69, His-109, Glu-145, Asp-179, His-182, His-216, Asp-229, His-231, and Glu-261.

This sequence belongs to the AP endonuclease 2 family. It depends on Zn(2+) as a cofactor.

It catalyses the reaction Endonucleolytic cleavage to 5'-phosphooligonucleotide end-products.. Its function is as follows. Endonuclease IV plays a role in DNA repair. It cleaves phosphodiester bonds at apurinic or apyrimidinic (AP) sites, generating a 3'-hydroxyl group and a 5'-terminal sugar phosphate. The protein is Probable endonuclease 4 of Actinobacillus pleuropneumoniae serotype 5b (strain L20).